Here is a 307-residue protein sequence, read N- to C-terminus: UDP-3-O-acyl-N-acetylglucosamine deacetylase (307 aa).

Zn(2+) is bound by residues H78, H241, and D245. The Proton donor role is filled by H268.

The protein belongs to the LpxC family. It depends on Zn(2+) as a cofactor.

It carries out the reaction a UDP-3-O-[(3R)-3-hydroxyacyl]-N-acetyl-alpha-D-glucosamine + H2O = a UDP-3-O-[(3R)-3-hydroxyacyl]-alpha-D-glucosamine + acetate. Its pathway is glycolipid biosynthesis; lipid IV(A) biosynthesis; lipid IV(A) from (3R)-3-hydroxytetradecanoyl-[acyl-carrier-protein] and UDP-N-acetyl-alpha-D-glucosamine: step 2/6. Catalyzes the hydrolysis of UDP-3-O-myristoyl-N-acetylglucosamine to form UDP-3-O-myristoylglucosamine and acetate, the committed step in lipid A biosynthesis. This is UDP-3-O-acyl-N-acetylglucosamine deacetylase from Paracidovorax citrulli (strain AAC00-1) (Acidovorax citrulli).